Consider the following 252-residue polypeptide: Hydroxyacylglutathione hydrolase (252 aa).

Zn(2+)-binding residues include histidine 54, histidine 56, aspartate 58, histidine 59, histidine 111, aspartate 130, and histidine 170.

The protein belongs to the metallo-beta-lactamase superfamily. Glyoxalase II family. In terms of assembly, monomer. It depends on Zn(2+) as a cofactor.

The catalysed reaction is an S-(2-hydroxyacyl)glutathione + H2O = a 2-hydroxy carboxylate + glutathione + H(+). It functions in the pathway secondary metabolite metabolism; methylglyoxal degradation; (R)-lactate from methylglyoxal: step 2/2. Its function is as follows. Thiolesterase that catalyzes the hydrolysis of S-D-lactoyl-glutathione to form glutathione and D-lactic acid. The protein is Hydroxyacylglutathione hydrolase of Francisella philomiragia subsp. philomiragia (strain ATCC 25017 / CCUG 19701 / FSC 153 / O#319-036).